The sequence spans 481 residues: Tagaturonate/fructuronate epimerase (481 aa).

The active-site Proton acceptor is D161. H162 provides a ligand contact to a divalent metal cation. The active-site Proton donor is E266. Residues K308 and H341 each contribute to the a divalent metal cation site.

It belongs to the UxaE family. The cofactor is a divalent metal cation.

It carries out the reaction keto-D-tagaturonate = keto-D-fructuronate. Its function is as follows. Catalyzes the epimerization of D-tagaturonate (D-TagA) to D-fructuronate (D-FruA). This Thermotoga maritima (strain ATCC 43589 / DSM 3109 / JCM 10099 / NBRC 100826 / MSB8) protein is Tagaturonate/fructuronate epimerase.